A 328-amino-acid polypeptide reads, in one-letter code: Tetraacyldisaccharide 4'-kinase (328 aa).

Position 55 to 62 (55 to 62) interacts with ATP; that stretch reads TAGGNGKT.

The protein belongs to the LpxK family.

It carries out the reaction a lipid A disaccharide + ATP = a lipid IVA + ADP + H(+). It participates in glycolipid biosynthesis; lipid IV(A) biosynthesis; lipid IV(A) from (3R)-3-hydroxytetradecanoyl-[acyl-carrier-protein] and UDP-N-acetyl-alpha-D-glucosamine: step 6/6. Its function is as follows. Transfers the gamma-phosphate of ATP to the 4'-position of a tetraacyldisaccharide 1-phosphate intermediate (termed DS-1-P) to form tetraacyldisaccharide 1,4'-bis-phosphate (lipid IVA). The chain is Tetraacyldisaccharide 4'-kinase from Escherichia coli O6:K15:H31 (strain 536 / UPEC).